The chain runs to 659 residues: MKVRSKKALFCSVSRLLHTERHTERQNLTTLFNRYVDKTDVFSWNSVIADLARSGDSAEALLAFSSMRKLSLYPTRSSFPCAIKACSSLFDIFSGKQTHQQAFVFGYQSDIFVSSALIVMYSTCGKLEDARKVFDEIPKRNIVSWTSMIRGYDLNGNALDAVSLFKDLLVDENDDDDAMFLDSMGLVSVISACSRVPAKGLTESIHSFVIKRGFDRGVSVGNTLLDAYAKGGEGGVAVARKIFDQIVDKDRVSYNSIMSVYAQSGMSNEAFEVFRRLVKNKVVTFNAITLSTVLLAVSHSGALRIGKCIHDQVIRMGLEDDVIVGTSIIDMYCKCGRVETARKAFDRMKNKNVRSWTAMIAGYGMHGHAAKALELFPAMIDSGVRPNYITFVSVLAACSHAGLHVEGWRWFNAMKGRFGVEPGLEHYGCMVDLLGRAGFLQKAYDLIQRMKMKPDSIIWSSLLAACRIHKNVELAEISVARLFELDSSNCGYYMLLSHIYADAGRWKDVERVRMIMKNRGLVKPPGFSLLELNGEVHVFLIGDEEHPQREKIYEFLAELNRKLLEAGYVSNTSSVCHDVDEEEKEMTLRVHSEKLAIAFGIMNTVPGSTVNVVKNLRVCSDCHNVIKLISKIVDREFVVRDAKRFHHFKDGGCSCGDYW.

A mitochondrion-targeting transit peptide spans 1-24 (MKVRSKKALFCSVSRLLHTERHTE). PPR repeat units lie at residues 40 to 74 (DVFSWNSVIADLARSGDSAEALLAFSSMRKLSLYP), 75 to 109 (TRSSFPCAIKACSSLFDIFSGKQTHQQAFVFGYQS), 110 to 144 (DIFVSSALIVMYSTCGKLEDARKVFDEIPKRNIVS), 145 to 171 (WTSMIRGYDLNGNALDAVSLFKDLLVD), 182 to 216 (DSMGLVSVISACSRVPAKGLTESIHSFVIKRGFDR), 217 to 249 (GVSVGNTLLDAYAKGGEGGVAVARKIFDQIVDK), 250 to 284 (DRVSYNSIMSVYAQSGMSNEAFEVFRRLVKNKVVT), 286 to 320 (NAITLSTVLLAVSHSGALRIGKCIHDQVIRMGLED), 321 to 351 (DVIVGTSIIDMYCKCGRVETARKAFDRMKNK), 352 to 386 (NVRSWTAMIAGYGMHGHAAKALELFPAMIDSGVRP), 387 to 422 (NYITFVSVLAACSHAGLHVEGWRWFNAMKGRFGVEP), and 423 to 453 (GLEHYGCMVDLLGRAGFLQKAYDLIQRMKMK). The interval 458–533 (IWSSLLAACR…PPGFSLLELN (76 aa)) is type E motif. Residues 534–564 (GEVHVFLIGDEEHPQREKIYEFLAELNRKLL) form a type E(+) motif region. Positions 565–659 (EAGYVSNTSS…DGGCSCGDYW (95 aa)) are type DYW motif.

It belongs to the PPR family. PCMP-H subfamily.

The protein resides in the mitochondrion. The polypeptide is Pentatricopeptide repeat-containing protein At3g26782, mitochondrial (PCMP-H34) (Arabidopsis thaliana (Mouse-ear cress)).